A 649-amino-acid chain; its full sequence is Acetyl-coenzyme A synthetase (649 aa).

CoA is bound by residues 191-194 (RGGR), Thr-311, and Asn-335. Residues 387 to 389 (GEP), 411 to 416 (DTWWQT), Asp-500, and Arg-515 contribute to the ATP site. Residue Ser-523 coordinates CoA. An ATP-binding site is contributed by Arg-526. The Mg(2+) site is built by Val-537, Phe-539, and Ile-542. Position 584 (Arg-584) interacts with CoA. Lys-609 carries the post-translational modification N6-acetyllysine.

Belongs to the ATP-dependent AMP-binding enzyme family. Mg(2+) serves as cofactor. Acetylated. Deacetylation by the SIR2-homolog deacetylase activates the enzyme.

It catalyses the reaction acetate + ATP + CoA = acetyl-CoA + AMP + diphosphate. Functionally, catalyzes the conversion of acetate into acetyl-CoA (AcCoA), an essential intermediate at the junction of anabolic and catabolic pathways. AcsA undergoes a two-step reaction. In the first half reaction, AcsA combines acetate with ATP to form acetyl-adenylate (AcAMP) intermediate. In the second half reaction, it can then transfer the acetyl group from AcAMP to the sulfhydryl group of CoA, forming the product AcCoA. The protein is Acetyl-coenzyme A synthetase of Vibrio cholerae serotype O1 (strain ATCC 39315 / El Tor Inaba N16961).